The chain runs to 462 residues: Indoleacetamide hydrolase (462 aa).

Residues K74 and S149 each act as charge relay system in the active site. The active-site Acyl-ester intermediate is the S173.

The protein belongs to the amidase family.

The protein operates within plant hormone metabolism; auxin biosynthesis. In terms of biological role, hydrolyzes indole-3-acetamide (IAM) into indole-3-acetic acid (IAA). In Allorhizobium ampelinum (strain ATCC BAA-846 / DSM 112012 / S4) (Agrobacterium vitis (strain S4)), this protein is Indoleacetamide hydrolase (iaaH).